The primary structure comprises 143 residues: Probable glycine cleavage system H protein (143 aa).

One can recognise a Lipoyl-binding domain in the interval 36–118; sequence VATVGITDFA…YGEGWIFKIK (83 aa). At lysine 77 the chain carries N6-lipoyllysine.

It belongs to the GcvH family. As to quaternary structure, the glycine cleavage system is composed of four proteins: P, T, L and H. It depends on (R)-lipoate as a cofactor.

The glycine cleavage system catalyzes the degradation of glycine. The H protein shuttles the methylamine group of glycine from the P protein to the T protein. The polypeptide is Probable glycine cleavage system H protein (Aeropyrum pernix (strain ATCC 700893 / DSM 11879 / JCM 9820 / NBRC 100138 / K1)).